The sequence spans 416 residues: 2,3-bisphosphoglycerate-independent phosphoglycerate mutase (416 aa).

It belongs to the BPG-independent phosphoglycerate mutase family. A-PGAM subfamily.

The enzyme catalyses (2R)-2-phosphoglycerate = (2R)-3-phosphoglycerate. It participates in carbohydrate degradation; glycolysis; pyruvate from D-glyceraldehyde 3-phosphate: step 3/5. Its function is as follows. Catalyzes the interconversion of 2-phosphoglycerate and 3-phosphoglycerate. This chain is 2,3-bisphosphoglycerate-independent phosphoglycerate mutase, found in Ignicoccus hospitalis (strain KIN4/I / DSM 18386 / JCM 14125).